A 227-amino-acid chain; its full sequence is 2-C-methyl-D-erythritol 4-phosphate cytidylyltransferase (227 aa).

The protein belongs to the IspD/TarI cytidylyltransferase family. IspD subfamily.

It catalyses the reaction 2-C-methyl-D-erythritol 4-phosphate + CTP + H(+) = 4-CDP-2-C-methyl-D-erythritol + diphosphate. It participates in isoprenoid biosynthesis; isopentenyl diphosphate biosynthesis via DXP pathway; isopentenyl diphosphate from 1-deoxy-D-xylulose 5-phosphate: step 2/6. In terms of biological role, catalyzes the formation of 4-diphosphocytidyl-2-C-methyl-D-erythritol from CTP and 2-C-methyl-D-erythritol 4-phosphate (MEP). The protein is 2-C-methyl-D-erythritol 4-phosphate cytidylyltransferase of Bordetella parapertussis (strain 12822 / ATCC BAA-587 / NCTC 13253).